The sequence spans 715 residues: D-ribulokinase YDR109C (715 aa).

The interval 1–27 (MKSRKRQNNMQNETREPAVLSSQETSI) is disordered.

This sequence belongs to the FGGY kinase family.

It catalyses the reaction D-ribulose + ATP = D-ribulose 5-phosphate + ADP + H(+). It functions in the pathway carbohydrate metabolism; pentose and glucuronate interconversion. Its function is as follows. Catalyzes ATP-dependent phosphorylation of D-ribulose at C-5 to form D-ribulose 5-phosphate. Postulated to function in a metabolite repair mechanism by preventing toxic accumulation of free D-ribulose formed by non-specific phosphatase activities. Alternatively, may play a role in regulating D-ribulose 5-phosphate recycling in the pentose phosphate pathway. This is D-ribulokinase YDR109C from Saccharomyces cerevisiae (strain ATCC 204508 / S288c) (Baker's yeast).